The sequence spans 708 residues: ABC transporter G family member 18 (708 aa).

One can recognise an ABC transporter domain in the interval 75–317; that stretch reads RRRFDFSRRK…FSSFGRPIPE (243 aa). 109 to 116 is a binding site for ATP; sequence GGSGAGKS. In terms of domain architecture, ABC transmembrane type-2 spans 402–612; it reads AETFILAKRY…PYEAVLINEF (211 aa). 7 consecutive transmembrane segments (helical) span residues 421 to 441, 456 to 476, 508 to 528, 537 to 557, 560 to 580, 589 to 609, and 681 to 701; these read LIGM…TVYW, FFAF…PVFI, LLAL…LSGG, LIIY…SGLI, VMMS…LGGF, LYWI…AVLI, and LWIT…SLLF.

This sequence belongs to the ABC transporter superfamily. ABCG family. Eye pigment precursor importer (TC 3.A.1.204) subfamily.

Its subcellular location is the membrane. The chain is ABC transporter G family member 18 (ABCG18) from Arabidopsis thaliana (Mouse-ear cress).